Consider the following 172-residue polypeptide: Myosin regulatory light polypeptide 9 (172 aa).

Residues methionine 1–glutamine 16 are compositionally biased toward basic residues. A disordered region spans residues methionine 1–serine 20. Serine 2 is modified (N-acetylserine). Residue threonine 19 is modified to Phosphothreonine; by MLCK, CIT and ROCK2. Serine 20 is subject to Phosphoserine; by CDC42BP, CIT, MLCK, PAK1, ROCK1, ROCK2, DAPK1, DAPK2 and ZIPK/DAPK3. 3 consecutive EF-hand domains span residues serine 29–asparagine 64, aspartate 98–arginine 133, and phenylalanine 134–aspartate 169. The Ca(2+) site is built by aspartate 42, asparagine 44, aspartate 46, and aspartate 53.

Myosin is a hexamer of 2 heavy chains and 4 light chains: interacts with myosin heavy chain MYO19. Interacts with LUZP1; the interaction results in inhibition of phosphorylation of MYL9 by DAPK3. Phosphorylation increases the actin-activated myosin ATPase activity and thereby regulates the contractile activity. It is required to generate the driving force in the migration of the cells but not necessary for localization of myosin-2 at the leading edge. Phosphorylation is required for myotube formation. Phosphorylated by DAPK3; DAPK3-mediated phosphorylation is inhibited by LUZP1. Smooth muscle tissues and in some, but not all, nonmuscle cells.

The protein localises to the cytoplasm. It is found in the cytoskeleton. Its subcellular location is the cell cortex. Myosin regulatory subunit that plays an important role in regulation of both smooth muscle and nonmuscle cell contractile activity via its phosphorylation. Implicated in cytokinesis, receptor capping, and cell locomotion. In myoblasts, may regulate PIEZO1-dependent cortical actomyosin assembly involved in myotube formation. The protein is Myosin regulatory light polypeptide 9 (MYL9) of Homo sapiens (Human).